The chain runs to 169 residues: Lipoprotein signal peptidase (169 aa).

A run of 3 helical transmembrane segments spans residues 12 to 32, 70 to 90, and 102 to 122; these read WLWLVVVVLVLDFASKQWILG, WFFAGIAVAIVAVLLVMMYRS, and AFIIGGALGNLFDRLWHGFVV. Residues Asp123 and Asp141 contribute to the active site. Residues 137–157 traverse the membrane as a helical segment; it reads FNLADSFICVGAAMIVLEGFL.

This sequence belongs to the peptidase A8 family.

The protein resides in the cell inner membrane. The enzyme catalyses Release of signal peptides from bacterial membrane prolipoproteins. Hydrolyzes -Xaa-Yaa-Zaa-|-(S,diacylglyceryl)Cys-, in which Xaa is hydrophobic (preferably Leu), and Yaa (Ala or Ser) and Zaa (Gly or Ala) have small, neutral side chains.. The protein operates within protein modification; lipoprotein biosynthesis (signal peptide cleavage). This protein specifically catalyzes the removal of signal peptides from prolipoproteins. The polypeptide is Lipoprotein signal peptidase (Serratia proteamaculans (strain 568)).